The chain runs to 368 residues: MNKKTIVVKFGTSTLTQGSPKLNSPHMMEIVRQIAQLHNDGFRIVIVTSGAIAAGRHYLNHPQLPPTIASKQLLAAVGQSQLIQAWEKLFAIYDIHIGQLLLTRADIEDRERFLNARDTLYALLDNHIIPVINENDAVATAEIKVGDNDNLSALVAILVQAEQLYLLTDQQGLFDSDPRKNPEAKLIPVVEQITDHIRSIAGGSGTNLGTGGMMTKIIAADVATRSGIETIIAPGNRPNVIADLAYEQNIGTKFIAHQSDRLESRKQWLFAAPSAGIITIDNGAQNAILEQNKSLLPAGIINVEGRFSRGEVVKIRTQSGKDIALGMPRYNSDALQLIKGRKSADIENVLGYEYGAVAMHRDDMIILS.

K9 serves as a coordination point for ATP. Substrate-binding residues include S49, D136, and N148. Residues 168–169 and 210–216 contribute to the ATP site; these read TD and TGGMMTK. The region spanning 275–353 is the PUA domain; the sequence is AGIITIDNGA…ADIENVLGYE (79 aa).

Belongs to the glutamate 5-kinase family.

The protein resides in the cytoplasm. The catalysed reaction is L-glutamate + ATP = L-glutamyl 5-phosphate + ADP. The protein operates within amino-acid biosynthesis; L-proline biosynthesis; L-glutamate 5-semialdehyde from L-glutamate: step 1/2. Its function is as follows. Catalyzes the transfer of a phosphate group to glutamate to form L-glutamate 5-phosphate. This Haemophilus influenzae (strain ATCC 51907 / DSM 11121 / KW20 / Rd) protein is Glutamate 5-kinase.